We begin with the raw amino-acid sequence, 86 residues long: Anti-adapter protein IraP (86 aa).

Positions 1–36 (MKNLIAELLVKLAEKEEESKELVAQVEALEIVVTAL) form a coiled coil.

The protein belongs to the IraP family. Interacts with RssB.

The protein resides in the cytoplasm. Its function is as follows. Inhibits RpoS proteolysis by regulating RssB activity, thereby increasing the stability of the sigma stress factor RpoS especially during phosphate starvation, but also in stationary phase and during nitrogen starvation. Its effect on RpoS stability is due to its interaction with RssB, which probably blocks the interaction of RssB with RpoS, and the consequent delivery of the RssB-RpoS complex to the ClpXP protein degradation pathway. The polypeptide is Anti-adapter protein IraP (Cronobacter sakazakii (strain ATCC BAA-894) (Enterobacter sakazakii)).